The primary structure comprises 329 residues: Transcription factor RAX1 (329 aa).

2 consecutive HTH myb-type domains span residues 9–62 (KTKV…LNYL) and 63–117 (RPNI…RKKL). DNA-binding regions (H-T-H motif) lie at residues 38–62 (WISFPLKAGLRRCGKSCRLRWLNYL) and 90–113 (WSIIAAHLPGRTDNDIKNYWNTKL). 2 stretches are compositionally biased toward low complexity: residues 122-131 (SDSSSSAMAS) and 144-154 (PTSPTTIPSSS). A disordered region spans residues 122 to 162 (SDSSSSAMASPYLNPISQDVKRPTSPTTIPSSSYNPYAENP).

In terms of tissue distribution, mostly expressed in roots. Also present in shoot tips and flower buds.

The protein localises to the nucleus. Transcription activator of genes involved in the regulation of meristematic competence, such as CUC2. Positively regulates axillary meristems (AMs) formation and development, especially at early phases of vegetative growth, probably by specifying a stem cell niche for AM formation. Modulates the negative regulation mediated by gibberellic acid on the timing of developmental phase transitions. This is Transcription factor RAX1 (RAX1) from Arabidopsis thaliana (Mouse-ear cress).